A 319-amino-acid polypeptide reads, in one-letter code: Annexin A4 (319 aa).

An N-acetylalanine modification is found at Ala2. At Thr7 the chain carries Phosphothreonine. A Phosphoserine modification is found at Ser12. Annexin repeat units follow at residues 14–85 (FNAA…GMMT), 86–157 (PTVL…SLSA), 169–241 (ALMR…AIVK), and 245–316 (NKSA…ILCG). Lys213, Lys293, and Lys300 each carry N6-acetyllysine.

Belongs to the annexin family. As to quaternary structure, monomer. Binds to SFTPA1 in a Ca(2+)-dependent manner.

It is found in the zymogen granule membrane. May play a role in alveolar type II cells through interaction with the surfactant protein SFTPA1 (SP-A). This chain is Annexin A4 (ANXA4), found in Bos taurus (Bovine).